The chain runs to 360 residues: D-alanine--D-alanine ligase (360 aa).

Residues 134 to 343 (KILAQRVGVP…YTELITRLIE (210 aa)) form the ATP-grasp domain. 169–224 (AEKLGRDMFVKPSNQGSSVGVSHVTNADEYAAALKEAFKYDDKVLVEETVPGTEVE) serves as a coordination point for ATP. Mg(2+) is bound by residues Asp-297, Glu-310, and Asn-312.

It belongs to the D-alanine--D-alanine ligase family. Mg(2+) serves as cofactor. Mn(2+) is required as a cofactor.

The protein resides in the cytoplasm. It catalyses the reaction 2 D-alanine + ATP = D-alanyl-D-alanine + ADP + phosphate + H(+). Its pathway is cell wall biogenesis; peptidoglycan biosynthesis. Its function is as follows. Cell wall formation. This is D-alanine--D-alanine ligase from Lactobacillus helveticus (strain DPC 4571).